The chain runs to 211 residues: N-(5'-phosphoribosyl)anthranilate isomerase (211 aa).

The protein belongs to the TrpF family.

The enzyme catalyses N-(5-phospho-beta-D-ribosyl)anthranilate = 1-(2-carboxyphenylamino)-1-deoxy-D-ribulose 5-phosphate. Its pathway is amino-acid biosynthesis; L-tryptophan biosynthesis; L-tryptophan from chorismate: step 3/5. The chain is N-(5'-phosphoribosyl)anthranilate isomerase from Pseudomonas paraeruginosa (strain DSM 24068 / PA7) (Pseudomonas aeruginosa (strain PA7)).